Reading from the N-terminus, the 413-residue chain is Serine--tRNA ligase (413 aa).

An L-serine-binding site is contributed by Thr221–Glu223. Arg252–Glu254 contacts ATP. Glu275 lines the L-serine pocket. Glu339–Ser342 is an ATP binding site. Residue Ser375 coordinates L-serine.

It belongs to the class-II aminoacyl-tRNA synthetase family. Type-1 seryl-tRNA synthetase subfamily. As to quaternary structure, homodimer. The tRNA molecule binds across the dimer.

It is found in the cytoplasm. It catalyses the reaction tRNA(Ser) + L-serine + ATP = L-seryl-tRNA(Ser) + AMP + diphosphate + H(+). It carries out the reaction tRNA(Sec) + L-serine + ATP = L-seryl-tRNA(Sec) + AMP + diphosphate + H(+). The protein operates within aminoacyl-tRNA biosynthesis; selenocysteinyl-tRNA(Sec) biosynthesis; L-seryl-tRNA(Sec) from L-serine and tRNA(Sec): step 1/1. Functionally, catalyzes the attachment of serine to tRNA(Ser). Is also able to aminoacylate tRNA(Sec) with serine, to form the misacylated tRNA L-seryl-tRNA(Sec), which will be further converted into selenocysteinyl-tRNA(Sec). This is Serine--tRNA ligase from Dehalococcoides mccartyi (strain ATCC BAA-2266 / KCTC 15142 / 195) (Dehalococcoides ethenogenes (strain 195)).